Here is a 486-residue protein sequence, read N- to C-terminus: LON peptidase N-terminal domain and RING finger protein C14F5.10c (486 aa).

An RING-type zinc finger spans residues 169 to 207; the sequence is CQICFGMLYDPVVSPCGHTFCGPCLMQALTQSPQCPTCR. The Lon N-terminal domain occupies 250 to 472; that stretch reads ESWLPLFISM…LVLIWLTQLQ (223 aa).

In Schizosaccharomyces pombe (strain 972 / ATCC 24843) (Fission yeast), this protein is LON peptidase N-terminal domain and RING finger protein C14F5.10c.